The chain runs to 412 residues: Alanyl-tRNA editing protein Aarsd1-B (412 aa).

Zn(2+) contacts are provided by histidine 108, histidine 112, cysteine 208, and histidine 212.

Belongs to the class-II aminoacyl-tRNA synthetase family. Alax-L subfamily. Zn(2+) serves as cofactor.

The protein localises to the cytoplasm. Functions in trans to edit the amino acid moiety from incorrectly charged tRNA(Ala). The sequence is that of Alanyl-tRNA editing protein Aarsd1-B (aarsd1-b) from Xenopus laevis (African clawed frog).